A 403-amino-acid polypeptide reads, in one-letter code: MTDLRLFTSESVTEGHPDKICDQISDSILDALLTQDPSSRAAVETLVTTGLVHVAGEVTTSGYVDIPQIVRDRIRDIGYDSSEVGFDGSNCGVTVSIGAQSPDIAQGVDRSYESRSGSASTDAHDLQGAGDQGLMFGYASRDTPVFMPLPIYLAHRLAERLAAVRHSGELSYLRPDGKTQVTIGYEGLVPRTVDTVVLSTQHGPQVSQEDLRREVEEHVIRPVLAAAAEIGIELDSRDATLLINPTGKFEIGGPKGDAGLTGRKIIVDTYGGFSRHGGGAFSGKDPSKVDRSAAYAMRWVAKNAVAAGLADRLEVQVAYAIGKAAPVGLYVEAFGTAHVPEDRIVRAIRETFDLRPAAIVERLDLLRPIYAETAAYGHFGRELPDFTWEALDRVADLQSAAGL.

Residue His16 participates in ATP binding. Residue Asp18 participates in Mg(2+) binding. Residue Glu44 coordinates K(+). Residues Glu57 and Gln100 each contribute to the L-methionine site. Residues Gln100–Arg110 form a flexible loop region. A disordered region spans residues Gln106 to Leu126. Residues Asp176 to Lys178, Lys248 to Phe249, Asp257, Arg263 to Lys264, Ala280, and Lys284 contribute to the ATP site. Asp257 serves as a coordination point for L-methionine. Position 288 (Lys288) interacts with L-methionine.

The protein belongs to the AdoMet synthase family. Homotetramer; dimer of dimers. Mg(2+) serves as cofactor. Requires K(+) as cofactor.

The protein localises to the cytoplasm. The catalysed reaction is L-methionine + ATP + H2O = S-adenosyl-L-methionine + phosphate + diphosphate. It participates in amino-acid biosynthesis; S-adenosyl-L-methionine biosynthesis; S-adenosyl-L-methionine from L-methionine: step 1/1. Catalyzes the formation of S-adenosylmethionine (AdoMet) from methionine and ATP. The overall synthetic reaction is composed of two sequential steps, AdoMet formation and the subsequent tripolyphosphate hydrolysis which occurs prior to release of AdoMet from the enzyme. This chain is S-adenosylmethionine synthase, found in Clavibacter sepedonicus (Clavibacter michiganensis subsp. sepedonicus).